The following is a 77-amino-acid chain: Conotoxin Cl6.12 (77 aa).

Residues 1–20 (MKFYLLLTAALLLTAVIIEA) form the signal peptide. Residues 21–36 (APTDHQDEARDLMREE) constitute a propeptide that is removed on maturation. Intrachain disulfides connect C43–C58, C51–C62, and C57–C68.

In terms of tissue distribution, expressed by the venom duct.

Its subcellular location is the secreted. The chain is Conotoxin Cl6.12 from Californiconus californicus (California cone).